We begin with the raw amino-acid sequence, 283 residues long: Tumor necrosis factor receptor superfamily member 14 (283 aa).

An N-terminal signal peptide occupies residues 1–38 (MEPPGDWGPPPWRSTPKTDVLRLVLYLTFLGAPCYAPA). Over 39–202 (LPSCKEDEYP…GAGTSSSHWV (164 aa)) the chain is Extracellular. Cystine bridges form between cysteine 42/cysteine 53, cysteine 54/cysteine 67, cysteine 57/cysteine 75, cysteine 78/cysteine 93, cysteine 96/cysteine 111, cysteine 99/cysteine 119, cysteine 121/cysteine 138, and cysteine 127/cysteine 135. TNFR-Cys repeat units lie at residues 42-75 (CKEDEYPVGSECCPKCSPGYRVKEACGELTGTVC), 78-119 (CPPG…NAVC), and 121-162 (CSPG…DTLC). N-linked (GlcNAc...) asparagine glycosylation is present at asparagine 110. Asparagine 173 carries an N-linked (GlcNAc...) asparagine glycan. The helical transmembrane segment at 203–223 (WWFLSGSLVIVIVCSTVGLII) threads the bilayer. At 224–283 (CVKRRKPRGDVVKVIVSVQRKRQEAEGEATVIEALQAPPDVTTVAVEETIPSFTGRSPNH) the chain is on the cytoplasmic side. Position 240 is a phosphoserine (serine 240).

The protein belongs to the tumor necrosis factor receptor superfamily. Interacts with TRAF2, TRAF3 and TRAF5. Interacts (via CRD1/TNFR-Cys 1) with CD160; this interaction is direct. Interacts with LTA and TNFSF14. Interacts (via CRD1/TNFR-Cys 1) in cis and trans with BTLA; the cis interactions inhibits the trans interactions. As to quaternary structure, (Microbial infection) Interacts with herpes simplex virus 1/HHV-1 envelope glycoprotein D. In terms of assembly, (Microbial infection) Interacts with herpes simplex virus 2/HHV-2 envelope glycoprotein D. Post-translationally, N-glycosylated. Widely expressed, with the highest expression in lung, spleen and thymus. Expressed in a subpopulation of B cells and monocytes. Expressed in naive T cells.

It localises to the cell membrane. In terms of biological role, receptor for four distinct ligands: The TNF superfamily members TNFSF14/LIGHT and homotrimeric LTA/lymphotoxin-alpha and the immunoglobulin superfamily members BTLA and CD160, altogether defining a complex stimulatory and inhibitory signaling network. Signals via the TRAF2-TRAF3 E3 ligase pathway to promote immune cell survival and differentiation. Participates in bidirectional cell-cell contact signaling between antigen presenting cells and lymphocytes. In response to ligation of TNFSF14/LIGHT, delivers costimulatory signals to T cells, promoting cell proliferation and effector functions. Interacts with CD160 on NK cells, enhancing IFNG production and anti-tumor immune response. In the context of bacterial infection, acts as a signaling receptor on epithelial cells for CD160 from intraepithelial lymphocytes, triggering the production of antimicrobial proteins and pro-inflammatory cytokines. Upon binding to CD160 on activated CD4+ T cells, down-regulates CD28 costimulatory signaling, restricting memory and alloantigen-specific immune response. May interact in cis (on the same cell) or in trans (on other cells) with BTLA. In cis interactions, appears to play an immune regulatory role inhibiting in trans interactions in naive T cells to maintain a resting state. In trans interactions, can predominate during adaptive immune response to provide survival signals to effector T cells. Functionally, (Microbial infection) Acts as a receptor for Herpes simplex virus 1/HHV-1. Its function is as follows. (Microbial infection) Acts as a receptor for Herpes simplex virus 2/HHV-2. The polypeptide is Tumor necrosis factor receptor superfamily member 14 (Homo sapiens (Human)).